The following is a 507-amino-acid chain: ATP synthase subunit beta (507 aa).

The disordered stretch occupies residues 1 to 22; the sequence is MSGLASKAKSRVKSSKGKNSTN. 183-190 is a binding site for ATP; that stretch reads GGAGVGKT.

Belongs to the ATPase alpha/beta chains family. F-type ATPases have 2 components, CF(1) - the catalytic core - and CF(0) - the membrane proton channel. CF(1) has five subunits: alpha(3), beta(3), gamma(1), delta(1), epsilon(1). CF(0) has three main subunits: a(1), b(2) and c(9-12). The alpha and beta chains form an alternating ring which encloses part of the gamma chain. CF(1) is attached to CF(0) by a central stalk formed by the gamma and epsilon chains, while a peripheral stalk is formed by the delta and b chains.

Its subcellular location is the cell inner membrane. The catalysed reaction is ATP + H2O + 4 H(+)(in) = ADP + phosphate + 5 H(+)(out). Its function is as follows. Produces ATP from ADP in the presence of a proton gradient across the membrane. The catalytic sites are hosted primarily by the beta subunits. The polypeptide is ATP synthase subunit beta (Ehrlichia chaffeensis (strain ATCC CRL-10679 / Arkansas)).